Consider the following 113-residue polypeptide: Ribosome-associated factor Y (113 aa).

The residue at position 66 (Lys-66) is an N6-acetyllysine. The segment at Lys-91–Glu-113 is disordered.

Belongs to the HPF/YfiA ribosome-associated protein family. YfiA subfamily. In terms of assembly, associates mainly with 70S ribosomes.

Functionally, during stationary phase, prevents 70S dimer formation, probably in order to regulate translation efficiency during transition between the exponential and the stationary phases. In addition, during environmental stress such as cold shock or excessive cell density at stationary phase, stabilizes the 70S ribosome against dissociation, inhibits translation initiation and increase translation accuracy. When normal growth conditions are restored, is quickly released from the ribosome. This Escherichia coli O157:H7 protein is Ribosome-associated factor Y.